Consider the following 101-residue polypeptide: U-scoloptoxin(10)-Sm2a (101 aa).

The signal sequence occupies residues 1-23 (MNKSMIILCAVLFLTYIIEENEA).

It belongs to the scoloptoxin-10 family. Contains 3 disulfide bonds. Expressed by the venom gland.

It is found in the secreted. The sequence is that of U-scoloptoxin(10)-Sm2a from Scolopendra morsitans (Tanzanian blue ringleg centipede).